A 392-amino-acid polypeptide reads, in one-letter code: ERBB-3 BINDING PROTEIN 1 (392 aa).

Necessary for nucleolar localization stretches follow at residues 1–50 and 298–392; these read MSSD…IVDI and HLQP…NAQE. The RNA-binding stretch occupies residues 48–56; the sequence is VDICEKGDS. The tract at residues 355-372 is interaction with RNA; sequence GIKKKKGGGKKKKAQKAG. Positions 357–367 match the Nuclear localization signal motif; that stretch reads KKKKGGGKKKK. Residues 358 to 369 are compositionally biased toward basic residues; the sequence is KKKGGGKKKKAQ. The segment at 358–392 is disordered; the sequence is KKKGGGKKKKAQKAGEKGEASTEAEPMDASSNAQE.

Belongs to the peptidase M24 family. In terms of assembly, component of a ribonucleoprotein complex. Interacts with REIL1 and REIL2. Strongly expressed in calls, roots and flowers, to a lower extent, in stems and siliques, but hardly detectable in leaves.

The protein resides in the nucleus. Binds RNA. Associates with 28S, 18S and 5.8S mature rRNAs, several rRNA precursors and probably U3 small nucleolar RNA. May be involved in regulation of intermediate and late steps of rRNA processing. May be involved in ribosome assembly. Required for expression of cell cycle genes such as CYCD3-1, RNR2A and CDKB1-1. Promotes, in a dose- and auxin-dependent manner, organ growth by stimulating both cell proliferation and expansion, via the regulation of RBR1 levels. The polypeptide is ERBB-3 BINDING PROTEIN 1 (Arabidopsis thaliana (Mouse-ear cress)).